The sequence spans 296 residues: NADH-cytochrome b5 reductase 2 (296 aa).

The chain crosses the membrane as a helical span at residues 2–24 (LVALAAIGVTVLLFLIKALGSGA). The FAD-binding FR-type domain occupies 35-147 (NAKYPLPLIE…RGPNGLLVYK (113 aa)). FAD contacts are provided by residues 127 to 142 (DSLK…GPNG) and 166 to 201 (VAKH…KCYL).

The protein belongs to the flavoprotein pyridine nucleotide cytochrome reductase family. It depends on FAD as a cofactor.

The protein localises to the membrane. The enzyme catalyses 2 Fe(III)-[cytochrome b5] + NADH = 2 Fe(II)-[cytochrome b5] + NAD(+) + H(+). Its function is as follows. NADH-cytochrome b5 reductases are involved in desaturation and elongation of fatty acids, cholesterol biosynthesis and drug metabolism. The protein is NADH-cytochrome b5 reductase 2 (cyb5r2) of Xenopus laevis (African clawed frog).